Consider the following 749-residue polypeptide: Fibronectin type III and SPRY domain-containing protein 2 (749 aa).

A coiled-coil region spans residues 205-317 (LNEALESAKD…TIEEMCHEEK (113 aa)). Fibronectin type-III domains lie at 375–470 (PVIN…TAPS) and 471–564 (PPII…TIGS). A B30.2/SPRY domain is found at 546 to 744 (NMGGPSVRSE…KVHNGISMPK (199 aa)).

Interacts with CMYA5. In cardiac muscles, identified in a complex composed of FSD2, CMYA5 and RYR2.

It localises to the nucleus. The protein resides in the sarcoplasmic reticulum. Its subcellular location is the cytoplasm. It is found in the perinuclear region. The polypeptide is Fibronectin type III and SPRY domain-containing protein 2 (FSD2) (Homo sapiens (Human)).